Here is a 217-residue protein sequence, read N- to C-terminus: Protein GrpE (217 aa).

This sequence belongs to the GrpE family. Homodimer.

The protein localises to the cytoplasm. Functionally, participates actively in the response to hyperosmotic and heat shock by preventing the aggregation of stress-denatured proteins, in association with DnaK and GrpE. It is the nucleotide exchange factor for DnaK and may function as a thermosensor. Unfolded proteins bind initially to DnaJ; upon interaction with the DnaJ-bound protein, DnaK hydrolyzes its bound ATP, resulting in the formation of a stable complex. GrpE releases ADP from DnaK; ATP binding to DnaK triggers the release of the substrate protein, thus completing the reaction cycle. Several rounds of ATP-dependent interactions between DnaJ, DnaK and GrpE are required for fully efficient folding. The sequence is that of Protein GrpE from Mycoplasma pneumoniae (strain ATCC 29342 / M129 / Subtype 1) (Mycoplasmoides pneumoniae).